The chain runs to 860 residues: Probable leucine--tRNA ligase, cytoplasmic (860 aa).

The 'HIGH' region motif lies at 41–51 (PYMNGKLHLGH). The 'KMSKS' region signature appears at 552–556 (KMSKS). K555 contacts ATP.

It belongs to the class-I aminoacyl-tRNA synthetase family.

It is found in the cytoplasm. The catalysed reaction is tRNA(Leu) + L-leucine + ATP = L-leucyl-tRNA(Leu) + AMP + diphosphate. The chain is Probable leucine--tRNA ligase, cytoplasmic from Enterocytozoon bieneusi (strain H348) (Microsporidian parasite).